A 456-amino-acid polypeptide reads, in one-letter code: MIWTRLPLYGPSKPSTGGWQPLRFDGGAFHVKGTAELARALLVLRLCAWPPLVTHGLAFQAWSQRLLGSRLSGALLRASIYGQFVAGETAEEVRNCVGQLQALGLQPLLAVPTEEEPDSTAKTSEVWYEENLSAMLRCVDLSRALVDAHGPARNSLMQLKVTALASTRLCKELSAWIQRPRGSSELSPERLAEAMDSGRNLQLSCLSTEQNQHLQASLSRLHRVAQHARAKCVRLLVDAEYTFINPALSLLVAALAVRWNSPEEGGPWVWNTYQAYLKDTHQRLEQDAEAAHKAGLAFGVKLVRGAYLDKERSMTQLQGKEDCTQPDYEATSRSYSRCLELMLRCVSNHGPPCHLMVASHNEESVRQATKRMWELGIPLDGPVCFGQLLGMCDHVSLALGQAGYMVYKSIPYGCLEEVIPYLIRRAQENRSVLQGARREQALLSQELWRRLLGRTA.

2 positions are modified to N6-acetyllysine: lysine 310 and lysine 320.

This sequence belongs to the proline oxidase family. FAD serves as cofactor.

It carries out the reaction trans-4-hydroxy-L-proline + a quinone = (3R,5S)-1-pyrroline-3-hydroxy-5-carboxylate + a quinol + H(+). The enzyme catalyses L-proline + a quinone = (S)-1-pyrroline-5-carboxylate + a quinol + H(+). Functionally, dehydrogenase that converts trans-4-L-hydroxyproline to delta-1-pyrroline-3-hydroxy-5-carboxylate (Hyp) using ubiquinone-10 as the terminal electron acceptor. Can also use proline as a substrate but with a very much lower efficiency. Does not react with other diastereomers of Hyp: trans-4-D-hydroxyproline and cis-4-L-hydroxyproline. Ubiquininone analogs such as menadione, duroquinone and ubiquinone-1 react more efficiently than oxygen as the terminal electron acceptor during catalysis. In Mus musculus (Mouse), this protein is Hydroxyproline dehydrogenase.